The following is a 63-amino-acid chain: ATP synthase F(0) complex subunit 8 (63 aa).

The chain crosses the membrane as a helical span at residues 8–24 (MWLLTILSMLLTLFVLF). Lys57 is subject to N6-acetyllysine.

The protein belongs to the ATPase protein 8 family. In terms of assembly, component of the ATP synthase complex composed at least of ATP5F1A/subunit alpha, ATP5F1B/subunit beta, ATP5MC1/subunit c (homooctomer), MT-ATP6/subunit a, MT-ATP8/subunit 8, ATP5ME/subunit e, ATP5MF/subunit f, ATP5MG/subunit g, ATP5MK/subunit k, ATP5MJ/subunit j, ATP5F1C/subunit gamma, ATP5F1D/subunit delta, ATP5F1E/subunit epsilon, ATP5PF/subunit F6, ATP5PB/subunit b, ATP5PD/subunit d, ATP5PO/subunit OSCP. ATP synthase complex consists of a soluble F(1) head domain (subunits alpha(3) and beta(3)) - the catalytic core - and a membrane F(0) domain - the membrane proton channel (subunits c, a, 8, e, f, g, k and j). These two domains are linked by a central stalk (subunits gamma, delta, and epsilon) rotating inside the F1 region and a stationary peripheral stalk (subunits F6, b, d, and OSCP). Interacts with PRICKLE3.

The protein resides in the mitochondrion membrane. In terms of biological role, subunit 8, of the mitochondrial membrane ATP synthase complex (F(1)F(0) ATP synthase or Complex V) that produces ATP from ADP in the presence of a proton gradient across the membrane which is generated by electron transport complexes of the respiratory chain. ATP synthase complex consist of a soluble F(1) head domain - the catalytic core - and a membrane F(1) domain - the membrane proton channel. These two domains are linked by a central stalk rotating inside the F(1) region and a stationary peripheral stalk. During catalysis, ATP synthesis in the catalytic domain of F(1) is coupled via a rotary mechanism of the central stalk subunits to proton translocation. In vivo, can only synthesize ATP although its ATP hydrolase activity can be activated artificially in vitro. Part of the complex F(0) domain. The chain is ATP synthase F(0) complex subunit 8 from Balaenoptera physalus (Fin whale).